The primary structure comprises 416 residues: Phosphoglycerate kinase (416 aa).

(2R)-3-phosphoglycerate contacts are provided by valine 23, aspartate 24, phenylalanine 25, asparagine 26, glutamine 38, arginine 39, serine 62, histidine 63, glycine 65, arginine 66, leucine 121, arginine 122, histidine 169, and arginine 170. Position 213 (glycine 213) interacts with ADP. Glycine 213 provides a ligand contact to CDP. Alanine 214 and lysine 215 together coordinate AMP. Alanine 214 contacts ATP. Alanine 214 provides a ligand contact to Mg(2+). Aspartate 218 is a binding site for CDP. Aspartate 218 lines the Mg(2+) pocket. Lysine 219 serves as a coordination point for AMP. Lysine 219 contacts ATP. Glycine 237 is a binding site for ADP. Glycine 237 provides a ligand contact to CDP. AMP is bound by residues glycine 238 and glycine 312. ATP-binding residues include glycine 238 and glycine 312. Residues glycine 337, alanine 339, and phenylalanine 342 each coordinate CDP. Phenylalanine 342 serves as a coordination point for ADP. Position 343 (glutamate 343) interacts with AMP. Residues glutamate 343, aspartate 374, and threonine 375 each contribute to the ATP site. Aspartate 374 contributes to the Mg(2+) binding site.

This sequence belongs to the phosphoglycerate kinase family. In terms of assembly, monomer. The cofactor is Mg(2+).

The protein resides in the cytoplasm. The protein localises to the mitochondrion. The catalysed reaction is (2R)-3-phosphoglycerate + ATP = (2R)-3-phospho-glyceroyl phosphate + ADP. Its pathway is carbohydrate degradation; glycolysis; pyruvate from D-glyceraldehyde 3-phosphate: step 2/5. Catalyzes one of the two ATP producing reactions in the glycolytic pathway via the reversible conversion of 1,3-diphosphoglycerate to 3-phosphoglycerate. Both L- and D- forms of purine and pyrimidine nucleotides can be used as substrates, but the activity is much lower on pyrimidines. Negatively regulates the biosynthesis of acetyl-CoA from pyruvate in the mitochondrion. The polypeptide is Phosphoglycerate kinase (PGK) (Funneliformis mosseae (Endomycorrhizal fungus)).